Reading from the N-terminus, the 520-residue chain is Maturase K (520 aa).

The protein belongs to the intron maturase 2 family. MatK subfamily.

It localises to the plastid. Its subcellular location is the chloroplast. In terms of biological role, usually encoded in the trnK tRNA gene intron. Probably assists in splicing its own and other chloroplast group II introns. The chain is Maturase K from Ruscus aculeatus (Butcher's broom).